The primary structure comprises 183 residues: Pyruvoyl-dependent arginine decarboxylase 2 (183 aa).

Serine 41 carries the pyruvic acid (Ser) modification.

It belongs to the PdaD family. Pyruvate serves as cofactor.

The enzyme catalyses L-arginine + H(+) = agmatine + CO2. The polypeptide is Pyruvoyl-dependent arginine decarboxylase 2 (pdaD2) (Methanosarcina acetivorans (strain ATCC 35395 / DSM 2834 / JCM 12185 / C2A)).